A 595-amino-acid polypeptide reads, in one-letter code: Actin-histidine N-methyltransferase (595 aa).

The interval Met-1 to Pro-22 is disordered. Residues Gln-10 to Val-20 show a composition bias toward polar residues. Residues Arg-75, Glu-104–Phe-106, Arg-254, Asp-275–His-279, and Ser-325–Phe-327 each bind S-adenosyl-L-methionine. Residues Glu-94 to Gly-314 form the SET domain. Position 513 is a phosphoserine (Ser-513). Over residues Glu-549–Glu-573 the composition is skewed to polar residues. Positions Glu-549–Glu-595 are disordered. A compositionally biased stretch (basic and acidic residues) spans Gly-574–Lys-583.

The protein belongs to the class V-like SAM-binding methyltransferase superfamily. SETD3 actin-histidine methyltransferase family. As to quaternary structure, interacts with MYOD1. In terms of processing, phosphorylated by GSK3B, which is required for recognition by the SCF(FBXW7) complex and subsequent degradation. Ubiquitinated by the SCF(FBXW7) complex following phosphorylation by GSK3B, leading to its degradation by the proteasome.

The protein localises to the cytoplasm. It is found in the nucleus. The enzyme catalyses L-histidyl-[protein] + S-adenosyl-L-methionine = N(tele)-methyl-L-histidyl-[protein] + S-adenosyl-L-homocysteine + H(+). In terms of biological role, protein-histidine N-methyltransferase that specifically mediates 3-methylhistidine (tele-methylhistidine) methylation of actin at 'His-73'. Histidine methylation of actin is required for smooth muscle contraction of the laboring uterus during delivery. Does not have protein-lysine N-methyltransferase activity and probably only catalyzes histidine methylation of actin. This chain is Actin-histidine N-methyltransferase, found in Plecturocebus moloch (Dusky titi monkey).